Here is a 223-residue protein sequence, read N- to C-terminus: Transcriptional regulatory protein PhoP (223 aa).

A Response regulatory domain is found at 2 to 116 (RVLVVEDNAL…EVMARMQALM (115 aa)). Position 51 is a 4-aspartylphosphate (Asp-51). Residues 124–222 (SQVISLPPFQ…VRGQGYLFEL (99 aa)) constitute a DNA-binding region (ompR/PhoB-type).

In terms of assembly, monomer in the inactive, unphosphorylated state and dimer in the active, phosphorylated state. Post-translationally, phosphorylated by PhoQ.

It is found in the cytoplasm. Its activity is regulated as follows. Feedback inhibited by MgrB, which seems to bind PhoQ, altering its activity and that of downstream effector PhoP. PhoP-regulated transcription is redox-sensitive, being activated when the periplasm becomes more reducing (deletion of dsbA/dsbB, or treatment with dithiothreitol). MgrB acts between DsbA/DsbB and PhoP/PhoQ in this pathway. Functionally, member of the two-component regulatory system PhoP/PhoQ involved in adaptation to low Mg(2+) environments and the control of acid resistance genes. In low periplasmic Mg(2+), PhoQ phosphorylates PhoP, resulting in the expression of PhoP-activated genes (PAG) and repression of PhoP-repressed genes (PRG). In high periplasmic Mg(2+), PhoQ dephosphorylates phospho-PhoP, resulting in the repression of PAG and may lead to expression of some PRG. Mediates magnesium influx to the cytosol by activation of MgtA. Promotes expression of the two-component regulatory system rstA/rstB and transcription of the hemL, mgrB, nagA, slyB, vboR and yrbL genes. The protein is Transcriptional regulatory protein PhoP (phoP) of Escherichia coli (strain K12).